The sequence spans 769 residues: DNA helicase/primase complex-associated protein (769 aa).

It belongs to the herpesviridae HEPA family. In terms of assembly, associates with the primase and the helicase to form the helicase-primase complex. Interacts with the origin-binding protein. Interacts with the polymerase catalytic subunit.

The protein resides in the host nucleus. Functionally, component of the helicase/primase complex. Unwinds the DNA at the replication forks and generates single-stranded DNA for both leading and lagging strand synthesis. The primase synthesizes short RNA primers on the lagging strand that the polymerase presumably elongates using dNTPs. The primase-associated factor has no known catalytic activity in the complex and may serve to facilitate the formation of the replisome by directly interacting with the origin-binding protein and the polymerase. The polypeptide is DNA helicase/primase complex-associated protein (MDV020) (Gallus gallus (Chicken)).